A 132-amino-acid polypeptide reads, in one-letter code: Large ribosomal subunit protein bL20c (132 aa).

This sequence belongs to the bacterial ribosomal protein bL20 family.

It localises to the plastid. Its subcellular location is the chloroplast. Functionally, binds directly to 23S ribosomal RNA and is necessary for the in vitro assembly process of the 50S ribosomal subunit. It is not involved in the protein synthesizing functions of that subunit. The protein is Large ribosomal subunit protein bL20c of Coffea arabica (Arabian coffee).